The following is a 623-amino-acid chain: NADPH-dependent diflavin oxidoreductase 1 (623 aa).

In terms of domain architecture, Flavodoxin-like spans 7 to 168 (IVILYGSETG…VYFEYEKKVL (162 aa)). FMN-binding positions include 13 to 18 (SETGNA), 60 to 63 (STTG), 106 to 115 (LGDSSYPKFN), and Asp-142. The region spanning 224–491 (ESLKVGRVNI…VGPGVGLAPL (268 aa)) is the FAD-binding FR-type domain. Residues Arg-383, 413-416 (RYYS), and 445-448 (GICT) contribute to the FAD site. Residue 538–539 (SR) coordinates NADP(+). Residue Trp-623 coordinates FAD.

The protein belongs to the NADPH-dependent diflavin oxidoreductase NDOR1 family. In the N-terminal section; belongs to the flavodoxin family. It in the C-terminal section; belongs to the flavoprotein pyridine nucleotide cytochrome reductase family. In terms of assembly, interacts with DRE2; as part of the cytosolic iron-sulfur (Fe-S) protein assembly (CIA) machinery. The cofactor is FAD. It depends on FMN as a cofactor.

Its subcellular location is the cytoplasm. It is found in the mitochondrion. It carries out the reaction 2 oxidized [2Fe-2S]-[protein] + NADPH = 2 reduced [2Fe-2S]-[protein] + NADP(+) + H(+). Its function is as follows. NADPH-dependent reductase which is a central component of the cytosolic iron-sulfur (Fe-S) protein assembly (CIA) machinery. Transfers electrons from NADPH via its FAD and FMN prosthetic groups to the [2Fe-2S] cluster of DRE2, another key component of the CIA machinery. In turn, this reduced cluster provides electrons for assembly of cytosolic iron-sulfur cluster proteins. Positively controls H(2)O(2)-induced cell death. The polypeptide is NADPH-dependent diflavin oxidoreductase 1 (Saccharomyces cerevisiae (strain ATCC 204508 / S288c) (Baker's yeast)).